Here is a 283-residue protein sequence, read N- to C-terminus: Pyridoxal kinase PdxY (283 aa).

S8 serves as a coordination point for substrate. ATP-binding residues include D110 and E147. D219 is a substrate binding site.

It belongs to the pyridoxine kinase family. PdxY subfamily. Homodimer. Mg(2+) serves as cofactor.

It catalyses the reaction pyridoxal + ATP = pyridoxal 5'-phosphate + ADP + H(+). Its pathway is cofactor metabolism; pyridoxal 5'-phosphate salvage; pyridoxal 5'-phosphate from pyridoxal: step 1/1. Functionally, pyridoxal kinase involved in the salvage pathway of pyridoxal 5'-phosphate (PLP). Catalyzes the phosphorylation of pyridoxal to PLP. This Leifsonia xyli subsp. xyli (strain CTCB07) protein is Pyridoxal kinase PdxY.